The chain runs to 122 residues: Small ribosomal subunit protein uS13 (122 aa).

Positions 97–122 (PVRGQRTHTNARTRKGPAKAIAGKKK) are disordered.

This sequence belongs to the universal ribosomal protein uS13 family. In terms of assembly, part of the 30S ribosomal subunit. Forms a loose heterodimer with protein S19. Forms two bridges to the 50S subunit in the 70S ribosome.

Located at the top of the head of the 30S subunit, it contacts several helices of the 16S rRNA. In the 70S ribosome it contacts the 23S rRNA (bridge B1a) and protein L5 of the 50S subunit (bridge B1b), connecting the 2 subunits; these bridges are implicated in subunit movement. Contacts the tRNAs in the A and P-sites. This chain is Small ribosomal subunit protein uS13, found in Rhizobium rhizogenes (strain K84 / ATCC BAA-868) (Agrobacterium radiobacter).